The sequence spans 1465 residues: Gag-Pol polyprotein (1465 aa).

G2 carries the N-myristoyl glycine; by host lipid modification. The short motif at 16-22 (FEHIRLR) is the Nuclear export signal element. Positions 26–32 (KKKYQIK) match the Nuclear localization signal motif. The tract at residues 116–144 (NAERNTTETSSGQKKNDKGVTVPPGGSQN) is disordered. 2 CCHC-type zinc fingers span residues 402–419 (VKCYNCGKFGHMQRQCPE) and 423–440 (MRCLKCGKPGHLAKDCRG). The region spanning 532–603 (IRALLDTGAD…TPINIIGRNI (72 aa)) is the Peptidase A2 domain. D537 acts as the For protease activity; shared with dimeric partner in catalysis. The 191-residue stretch at 659–849 (EGKISKIGGE…PPYEWMGYKL (191 aa)) folds into the Reverse transcriptase domain. Mg(2+)-binding residues include D725, D800, and D801. The interval 842-850 (YEWMGYKLW) is RT 'primer grip'. The Tryptophan repeat motif motif lies at 1012–1028 (WEQWWADYWQVSWIPDW). Residues 1048-1171 (IPKEDVYYVD…IDKLVSQGMR (124 aa)) form the RNase H type-1 domain. Mg(2+) is bound by residues D1057, E1092, D1112, and D1163. The Integrase-type zinc-finger motif lies at 1177-1218 (EKIEEAQEEHERYHNNWRNLADTYGLPQIVAKEIVAMCPKCQ). Zn(2+)-binding residues include H1186, H1190, C1214, and C1217. Positions 1228–1378 (VDASPGVWQM…TPAERLINMI (151 aa)) constitute an Integrase catalytic domain. Residues D1238 and D1290 each contribute to the Mg(2+) site. Residues 1397–1444 (FRVYYREGRDPVWKGPGQLIWKGEGAVVIKGGVELKEYPRRKAKIIKD) constitute a DNA-binding region (integrase-type).

Homotrimer. Interacts with gp41 (via C-terminus). As to quaternary structure, homodimer. The active site consists of two apposed aspartic acid residues. In terms of assembly, heterodimer of p66 RT and p51 RT (RT p66/p51). Heterodimerization of RT is essential for DNA polymerase activity. Despite the sequence identities, p66 RT and p51 RT have distinct folding. Homotetramer; may further associate as a homohexadecamer. The cofactor is Mg(2+). Specific enzymatic cleavages by the viral protease yield mature proteins. The protease is released by autocatalytic cleavage. The polyprotein is cleaved during and after budding, this process is termed maturation. Proteolytic cleavage of p66 RT removes the RNase H domain to yield the p51 RT subunit. In terms of processing, capsid protein p24 is phosphorylated.

The protein localises to the virion. The protein resides in the host nucleus. Its subcellular location is the host cytoplasm. It localises to the host cell membrane. It carries out the reaction Specific for a P1 residue that is hydrophobic, and P1' variable, but often Pro.. It catalyses the reaction Endohydrolysis of RNA in RNA/DNA hybrids. Three different cleavage modes: 1. sequence-specific internal cleavage of RNA. Human immunodeficiency virus type 1 and Moloney murine leukemia virus enzymes prefer to cleave the RNA strand one nucleotide away from the RNA-DNA junction. 2. RNA 5'-end directed cleavage 13-19 nucleotides from the RNA end. 3. DNA 3'-end directed cleavage 15-20 nucleotides away from the primer terminus.. The enzyme catalyses 3'-end directed exonucleolytic cleavage of viral RNA-DNA hybrid.. The catalysed reaction is DNA(n) + a 2'-deoxyribonucleoside 5'-triphosphate = DNA(n+1) + diphosphate. Its activity is regulated as follows. The viral protease is inhibited by many synthetic protease inhibitors (PIs), such as amprenavir, atazanavir, indinavir, loprinavir, nelfinavir, ritonavir and saquinavir. RT can be inhibited either by nucleoside RT inhibitors (NRTIs) or by non nucleoside RT inhibitors (NNRTIs). NRTIs act as chain terminators, whereas NNRTIs inhibit DNA polymerization by binding a small hydrophobic pocket near the RT active site and inducing an allosteric change in this region. Classical NRTIs are abacavir, adefovir (PMEA), didanosine (ddI), lamivudine (3TC), stavudine (d4T), tenofovir (PMPA), zalcitabine (ddC), and zidovudine (AZT). Classical NNRTIs are atevirdine (BHAP U-87201E), delavirdine, efavirenz (DMP-266), emivirine (I-EBU), and nevirapine (BI-RG-587). The tritherapies used as a basic effective treatment of AIDS associate two NRTIs and one NNRTI. Use of protease inhibitors in tritherapy regimens permit more ambitious therapeutic strategies. In terms of biological role, gag-Pol polyprotein and Gag polyprotein may regulate their own translation, by the binding genomic RNA in the 5'-UTR. At low concentration, Gag-Pol and Gag would promote translation, whereas at high concentration, the polyproteins encapsidate genomic RNA and then shut off translation. Matrix protein p17 has two main functions: in infected cell, it targets Gag and Gag-pol polyproteins to the plasma membrane via a multipartite membrane-binding signal, that includes its myristointegration complex. The myristoylation signal and the NLS exert conflicting influences its subcellular localization. The key regulation of these motifs might be phosphorylation of a portion of MA molecules on the C-terminal tyrosine at the time of virus maturation, by virion-associated cellular tyrosine kinase. Implicated in the release from host cell mediated by Vpu. Its function is as follows. Capsid protein p24 forms the conical core that encapsulates the genomic RNA-nucleocapsid complex in the virion. The core is constituted by capsid protein hexamer subunits. The core is disassembled soon after virion entry. Interaction with host PPIA/CYPA protects the virus from restriction by host TRIM5-alpha and from an unknown antiviral activity in host cells. This capsid restriction by TRIM5 is one of the factors which restricts SIV to the simian species. Functionally, nucleocapsid protein p7 encapsulates and protects viral dimeric unspliced (genomic) RNA. Binds these RNAs through its zinc fingers. Facilitates rearangement of nucleic acid secondary structure during retrotranscription of genomic RNA. This capability is referred to as nucleic acid chaperone activity. In terms of biological role, the aspartyl protease mediates proteolytic cleavages of Gag and Gag-Pol polyproteins during or shortly after the release of the virion from the plasma membrane. Cleavages take place as an ordered, step-wise cascade to yield mature proteins. This process is called maturation. Displays maximal activity during the budding process just prior to particle release from the cell. Also cleaves Nef and Vif, probably concomitantly with viral structural proteins on maturation of virus particles. Hydrolyzes host EIF4GI and PABP1 in order to shut off the capped cellular mRNA translation. The resulting inhibition of cellular protein synthesis serves to ensure maximal viral gene expression and to evade host immune response. Reverse transcriptase/ribonuclease H (RT) is a multifunctional enzyme that converts the viral dimeric RNA genome into dsDNA in the cytoplasm, shortly after virus entry into the cell. This enzyme displays a DNA polymerase activity that can copy either DNA or RNA templates, and a ribonuclease H (RNase H) activity that cleaves the RNA strand of RNA-DNA heteroduplexes in a partially processive 3' to 5' endonucleasic mode. Conversion of viral genomic RNA into dsDNA requires many steps. A tRNA binds to the primer-binding site (PBS) situated at the 5'-end of the viral RNA. RT uses the 3' end of the tRNA primer to perform a short round of RNA-dependent minus-strand DNA synthesis. The reading proceeds through the U5 region and ends after the repeated (R) region which is present at both ends of viral RNA. The portion of the RNA-DNA heteroduplex is digested by the RNase H, resulting in a ssDNA product attached to the tRNA primer. This ssDNA/tRNA hybridizes with the identical R region situated at the 3' end of viral RNA. This template exchange, known as minus-strand DNA strong stop transfer, can be either intra- or intermolecular. RT uses the 3' end of this newly synthesized short ssDNA to perform the RNA-dependent minus-strand DNA synthesis of the whole template. RNase H digests the RNA template except for two polypurine tracts (PPTs) situated at the 5'-end and near the center of the genome. It is not clear if both polymerase and RNase H activities are simultaneous. RNase H can probably proceed both in a polymerase-dependent (RNA cut into small fragments by the same RT performing DNA synthesis) and a polymerase-independent mode (cleavage of remaining RNA fragments by free RTs). Secondly, RT performs DNA-directed plus-strand DNA synthesis using the PPTs that have not been removed by RNase H as primers. PPTs and tRNA primers are then removed by RNase H. The 3' and 5' ssDNA PBS regions hybridize to form a circular dsDNA intermediate. Strand displacement synthesis by RT to the PBS and PPT ends produces a blunt ended, linear dsDNA copy of the viral genome that includes long terminal repeats (LTRs) at both ends. Its function is as follows. Integrase catalyzes viral DNA integration into the host chromosome, by performing a series of DNA cutting and joining reactions. This enzyme activity takes place after virion entry into a cell and reverse transcription of the RNA genome in dsDNA. The first step in the integration process is 3' processing. This step requires a complex comprising the viral genome, matrix protein, Vpr and integrase. This complex is called the pre-integration complex (PIC). The integrase protein removes 2 nucleotides from each 3' end of the viral DNA, leaving recessed CA OH's at the 3' ends. In the second step, the PIC enters cell nucleus. This process is mediated through integrase and Vpr proteins, and allows the virus to infect a non dividing cell. This ability to enter the nucleus is specific of lentiviruses, other retroviruses cannot and rely on cell division to access cell chromosomes. In the third step, termed strand transfer, the integrase protein joins the previously processed 3' ends to the 5' ends of strands of target cellular DNA at the site of integration. The 5'-ends are produced by integrase-catalyzed staggered cuts, 5 bp apart. A Y-shaped, gapped, recombination intermediate results, with the 5'-ends of the viral DNA strands and the 3' ends of target DNA strands remaining unjoined, flanking a gap of 5 bp. The last step is viral DNA integration into host chromosome. This involves host DNA repair synthesis in which the 5 bp gaps between the unjoined strands are filled in and then ligated. Since this process occurs at both cuts flanking the SIV genome, a 5 bp duplication of host DNA is produced at the ends of SIV integration. Alternatively, Integrase may catalyze the excision of viral DNA just after strand transfer, this is termed disintegration. The protein is Gag-Pol polyprotein (gag-pol) of Cercopithecidae (Old World monkeys).